Consider the following 526-residue polypeptide: Ubiquitin carboxyl-terminal hydrolase 17-like protein A (526 aa).

A disordered region spans residues 1–21 (MVVALSFPEADPALSSPDAPE). One can recognise a USP domain in the interval 51-348 (CGLQNTGNSC…NAYVLFYVQQ (298 aa)). Cys-60 functions as the Nucleophile in the catalytic mechanism. The Proton acceptor role is filled by His-307. Over residues 374–385 (KKSRRKKHKKKS) the composition is skewed to basic residues. Disordered regions lie at residues 374-394 (KKSR…LGEP) and 465-494 (RSTA…SQGP). Residues 473-486 (DSPDKENQPLHNAD) show a composition bias toward basic and acidic residues.

It belongs to the peptidase C19 family. Post-translationally, polyubiquitinated; ubiquitination leads to its subsequent degradation. Expressed in hematopoietic progenitor cell lines Ba/F3 and FDCP1. Not detected in brain, lung, liver, kidney, thymus, spleen and bone marrow.

The enzyme catalyses Thiol-dependent hydrolysis of ester, thioester, amide, peptide and isopeptide bonds formed by the C-terminal Gly of ubiquitin (a 76-residue protein attached to proteins as an intracellular targeting signal).. Its function is as follows. Deubiquitinating enzyme that removes conjugated ubiquitin from specific proteins to regulate different cellular processes. Has deubiquitinating enzyme activity for DNAH5, suggesting a role in the regulation of DNAH5 degradation by the ubiquitin-proteasome pathway. Has growth-suppressing activity; induces arrest in G1 phase upon controlled expression. This chain is Ubiquitin carboxyl-terminal hydrolase 17-like protein A (Usp17la), found in Mus musculus (Mouse).